We begin with the raw amino-acid sequence, 1551 residues long: ABC-type transporter phomO (1551 aa).

The next 7 helical transmembrane spans lie at 34-54 (LYFE…LLAA), 110-130 (CTAG…CTTV), 139-159 (SVPA…LAHF), 172-192 (SSSL…APLV), 202-222 (GSAL…LIAV), 314-334 (LGLY…FTLA), and 358-378 (GLIG…GWYW). Positions 326–599 (LCLAGFTLAQ…LLQIIPSFGA (274 aa)) constitute an ABC transmembrane type-1 1 domain. N-linked (GlcNAc...) asparagine glycosylation is present at asparagine 384. 4 consecutive transmembrane segments (helical) span residues 428–448 (LAYA…TWML), 452–472 (VGPP…ASTY), 535–555 (LIVG…VLVF), and 577–597 (LIWI…IPSF). Residues 645–861 (IHNSSFSYTD…VEDENGDVDN (217 aa)) form the ABC transporter 1 domain. Residue asparagine 647 is glycosylated (N-linked (GlcNAc...) asparagine). 678–685 (GPAGCGKS) contributes to the ATP binding site. Asparagine 721 carries N-linked (GlcNAc...) asparagine glycosylation. The segment at 843–889 (YQFPPSQADVEDENGDVDNGAENTRPRESSHTTEAQSGPPEPKSKPT) is disordered. A run of 4 helical transmembrane segments spans residues 903–923 (SIGF…AFCL), 959–979 (VLPL…IVPL), 1027–1044 (LFNT…VILI), and 1137–1157 (LVLN…AVGL). The ABC transmembrane type-1 2 domain occupies 910-1199 (VLFIGGGIIF…LLTAWTSLET (290 aa)). The N-linked (GlcNAc...) asparagine glycan is linked to asparagine 1179. Over residues 1219–1228 (DVLVRPDSLD) the composition is skewed to basic and acidic residues. The segment at 1219–1296 (DVLVRPDSLD…HEATTITTTS (78 aa)) is disordered. The span at 1259–1270 (YDDDDESDENTD) shows a compositional bias: acidic residues. The ABC transporter 2 domain occupies 1287-1535 (HEATTITTTS…SDIFAFFGRS (249 aa)). 1323–1330 (GRTGSGKS) is an ATP binding site. Asparagine 1486 is a glycosylation site (N-linked (GlcNAc...) asparagine).

The protein belongs to the ABC transporter superfamily. ABCC family. Conjugate transporter (TC 3.A.1.208) subfamily.

The protein resides in the membrane. Functionally, ABC-type transporter; part of the gene cluster that mediates the biosynthesis of the phomopsins, a group of hexapeptide mycotoxins which infects lupins and causes lupinosis disease in livestock. In Diaporthe leptostromiformis (Lupinosis disease fungus), this protein is ABC-type transporter phomO.